Consider the following 384-residue polypeptide: Zinc finger protein GLIS2 homolog (384 aa).

The C2H2-type 1 zinc finger occupies 128–153; that stretch reads FVCNWTDCDRVFDTLDALAQHVTQRH. The C2H2-type 2; degenerate zinc finger occupies 163 to 190; that stretch reads YYCRWRGCQRSERGFNARYKMLVHTRTH. 3 consecutive C2H2-type zinc fingers follow at residues 196–218, 224–248, and 254–280; these read HRCH…IRSH, YKCS…TRTH, and YMCK…TFKH. The segment at 321-343 is disordered; the sequence is SSSSARYYDDSNNEPSDYSLKPK.

The protein belongs to the GLI C2H2-type zinc-finger protein family.

Its subcellular location is the nucleus. Transcription factor which represses a set of lipase genes involved in fat catabolism. The sequence is that of Zinc finger protein GLIS2 homolog (sug) from Drosophila melanogaster (Fruit fly).